The primary structure comprises 192 residues: Cytidylate kinase (192 aa).

7-15 (GPAGSGKST) contacts ATP.

This sequence belongs to the cytidylate kinase family. Type 2 subfamily.

It localises to the cytoplasm. It catalyses the reaction CMP + ATP = CDP + ADP. It carries out the reaction dCMP + ATP = dCDP + ADP. The protein is Cytidylate kinase of Haloarcula marismortui (strain ATCC 43049 / DSM 3752 / JCM 8966 / VKM B-1809) (Halobacterium marismortui).